We begin with the raw amino-acid sequence, 1118 residues long: Cytospin-A (1118 aa).

Disordered regions lie at residues Met1 to Ile157 and Gly198 to Ser221. Polar residues-rich tracts occupy residues Asn57–Thr102 and Ser112–Ala123. Over residues Ser144–Ser153 the composition is skewed to basic and acidic residues. Acidic residues predominate over residues Glu204 to Glu215. Positions Ala225–Gly264 form a coiled coil. Residues Ala289 to Glu379 form a disordered region. Residues Ser343–Ala363 are compositionally biased toward low complexity. Coiled-coil stretches lie at residues Cys384–Leu438 and Gly475–Val796. Disordered stretches follow at residues Gln771 to Asp790, Phe837 to Ala876, and Ser920 to Asp1001. Positions Asp838–Val855 are enriched in polar residues. Residues Pro861–Thr872 show a composition bias toward pro residues. Positions Gln930 to Arg945 are enriched in polar residues. A compositionally biased stretch (basic and acidic residues) spans Arg946–Ser956. Residues Ala961–Ser986 show a composition bias toward low complexity. Residues Gly1012–Glu1117 enclose the Calponin-homology (CH) domain.

This sequence belongs to the cytospin-A family. As to quaternary structure, may interact with both microtubules and actin cytoskeleton.

Its subcellular location is the cytoplasm. The protein localises to the cytoskeleton. The protein resides in the spindle. It localises to the cell junction. It is found in the gap junction. In terms of biological role, involved in cytokinesis and spindle organization. May play a role in actin cytoskeleton organization and microtubule stabilization and hence required for proper cell adhesion and migration. The chain is Cytospin-A (specc1l) from Takifugu rubripes (Japanese pufferfish).